We begin with the raw amino-acid sequence, 149 residues long: Cytochrome c-type biogenesis protein CcmE (149 aa).

Over 1–8 (MNPKRKQR) the chain is Cytoplasmic. The chain crosses the membrane as a helical; Signal-anchor for type II membrane protein span at residues 9-29 (LIIVSFLVIGVSATVGLIMAA). Residues 30 to 149 (LSSNVNHFYN…AQDAAPAQTY (120 aa)) are Periplasmic-facing. Residues His124 and Tyr128 each coordinate heme.

The protein belongs to the CcmE/CycJ family.

The protein resides in the cell inner membrane. Its function is as follows. Heme chaperone required for the biogenesis of c-type cytochromes. Transiently binds heme delivered by CcmC and transfers the heme to apo-cytochromes in a process facilitated by CcmF and CcmH. This chain is Cytochrome c-type biogenesis protein CcmE, found in Hahella chejuensis (strain KCTC 2396).